The following is a 241-amino-acid chain: Pyridoxine 5'-phosphate synthase (241 aa).

Asparagine 7 contributes to the 3-amino-2-oxopropyl phosphate binding site. Position 9–10 (9–10 (DH)) interacts with 1-deoxy-D-xylulose 5-phosphate. Arginine 18 lines the 3-amino-2-oxopropyl phosphate pocket. The active-site Proton acceptor is histidine 43. The 1-deoxy-D-xylulose 5-phosphate site is built by arginine 45 and histidine 50. The active-site Proton acceptor is glutamate 70. Residue threonine 100 coordinates 1-deoxy-D-xylulose 5-phosphate. The active-site Proton donor is histidine 191. Residues glycine 192 and 213–214 (GH) contribute to the 3-amino-2-oxopropyl phosphate site.

It belongs to the PNP synthase family. Homooctamer; tetramer of dimers.

Its subcellular location is the cytoplasm. The catalysed reaction is 3-amino-2-oxopropyl phosphate + 1-deoxy-D-xylulose 5-phosphate = pyridoxine 5'-phosphate + phosphate + 2 H2O + H(+). Its pathway is cofactor biosynthesis; pyridoxine 5'-phosphate biosynthesis; pyridoxine 5'-phosphate from D-erythrose 4-phosphate: step 5/5. Functionally, catalyzes the complicated ring closure reaction between the two acyclic compounds 1-deoxy-D-xylulose-5-phosphate (DXP) and 3-amino-2-oxopropyl phosphate (1-amino-acetone-3-phosphate or AAP) to form pyridoxine 5'-phosphate (PNP) and inorganic phosphate. The chain is Pyridoxine 5'-phosphate synthase from Acidithiobacillus ferrooxidans (strain ATCC 23270 / DSM 14882 / CIP 104768 / NCIMB 8455) (Ferrobacillus ferrooxidans (strain ATCC 23270)).